The chain runs to 21 residues: Nigrocin-2GRb (21 aa).

Expressed by the skin glands.

It is found in the secreted. Its function is as follows. Antimicrobial peptide active against the Gram-positive bacterium S.aureus (MIC=12.5 uM) and against the Gram-negative bacteria E.coli (MIC=3 uM). Has antifungal activity against C.albicans (MIC=50 uM). Has some hemolytic activity against human erythrocytes (LC(50)=40 uM). In Odorrana grahami (Yunnanfu frog), this protein is Nigrocin-2GRb.